The sequence spans 1299 residues: DNA-directed RNA polymerase subunit beta' (1299 aa).

C60, C62, C75, and C78 together coordinate Zn(2+). The Mg(2+) site is built by D535, D537, and D539. 4 residues coordinate Zn(2+): C877, C954, C961, and C964.

The protein belongs to the RNA polymerase beta' chain family. In terms of assembly, the RNAP catalytic core consists of 2 alpha, 1 beta, 1 beta' and 1 omega subunit. When a sigma factor is associated with the core the holoenzyme is formed, which can initiate transcription. Mg(2+) is required as a cofactor. Zn(2+) serves as cofactor.

The enzyme catalyses RNA(n) + a ribonucleoside 5'-triphosphate = RNA(n+1) + diphosphate. Its function is as follows. DNA-dependent RNA polymerase catalyzes the transcription of DNA into RNA using the four ribonucleoside triphosphates as substrates. The polypeptide is DNA-directed RNA polymerase subunit beta' (Pseudarthrobacter chlorophenolicus (strain ATCC 700700 / DSM 12829 / CIP 107037 / JCM 12360 / KCTC 9906 / NCIMB 13794 / A6) (Arthrobacter chlorophenolicus)).